The chain runs to 91 residues: Acylphosphatase (91 aa).

One can recognise an Acylphosphatase-like domain in the interval 5-91 (RLHAIVEGEV…KGEFTSFDTY (87 aa)). Active-site residues include R20 and N38.

This sequence belongs to the acylphosphatase family.

It catalyses the reaction an acyl phosphate + H2O = a carboxylate + phosphate + H(+). The protein is Acylphosphatase (acyP) of Metallosphaera sedula (strain ATCC 51363 / DSM 5348 / JCM 9185 / NBRC 15509 / TH2).